Consider the following 132-residue polypeptide: uncharacterized protein (132 aa).

The helical transmembrane segment at 10-30 (LVLFFTIILIALCPFVYYLWD) threads the bilayer. Residues 50–79 (KNCSTEIEHAIEEHKRKNKEKKEAKEKRLA) adopt a coiled-coil conformation.

Its subcellular location is the membrane. This is an uncharacterized protein from Invertebrate iridescent virus 6 (IIV-6).